We begin with the raw amino-acid sequence, 349 residues long: Anthranilate phosphoribosyltransferase (349 aa).

5-phospho-alpha-D-ribose 1-diphosphate is bound by residues Gly94, Gly97 to Asp98, Thr102, Asn104 to Thr107, Lys122 to Ser130, and Ser134. An anthranilate-binding site is contributed by Gly94. A Mg(2+)-binding site is contributed by Ser106. Asn125 serves as a coordination point for anthranilate. Position 180 (Arg180) interacts with anthranilate. The Mg(2+) site is built by Asp239 and Glu240.

This sequence belongs to the anthranilate phosphoribosyltransferase family. In terms of assembly, homodimer. It depends on Mg(2+) as a cofactor.

It catalyses the reaction N-(5-phospho-beta-D-ribosyl)anthranilate + diphosphate = 5-phospho-alpha-D-ribose 1-diphosphate + anthranilate. Its pathway is amino-acid biosynthesis; L-tryptophan biosynthesis; L-tryptophan from chorismate: step 2/5. In terms of biological role, catalyzes the transfer of the phosphoribosyl group of 5-phosphorylribose-1-pyrophosphate (PRPP) to anthranilate to yield N-(5'-phosphoribosyl)-anthranilate (PRA). This Trichlorobacter lovleyi (strain ATCC BAA-1151 / DSM 17278 / SZ) (Geobacter lovleyi) protein is Anthranilate phosphoribosyltransferase.